Reading from the N-terminus, the 1368-residue chain is DNA-directed RNA polymerase subunit beta (1368 aa).

This sequence belongs to the RNA polymerase beta chain family. As to quaternary structure, the RNAP catalytic core consists of 2 alpha, 1 beta, 1 beta' and 1 omega subunit. When a sigma factor is associated with the core the holoenzyme is formed, which can initiate transcription.

The enzyme catalyses RNA(n) + a ribonucleoside 5'-triphosphate = RNA(n+1) + diphosphate. Its function is as follows. DNA-dependent RNA polymerase catalyzes the transcription of DNA into RNA using the four ribonucleoside triphosphates as substrates. The chain is DNA-directed RNA polymerase subunit beta from Paraburkholderia phytofirmans (strain DSM 17436 / LMG 22146 / PsJN) (Burkholderia phytofirmans).